A 1667-amino-acid chain; its full sequence is Myomesin-1 (1667 aa).

Phosphoserine is present on residues S124 and S142. Residues 192 to 210 (SKQSTASKQSATSKRTTST) show a composition bias toward low complexity. Residues 192 to 217 (SKQSTASKQSATSKRTTSTLQREETF) form a disordered region. Ig-like C2-type domains are found at residues 258–349 (PEFI…ASVV) and 376–478 (PYGY…AYVF). 3 consecutive Fibronectin type-III domains span residues 492–587 (APLD…ALDP), 620–714 (PPTD…VVGD), and 721–814 (APGK…VKAA). The tract at residues 818–915 (GVSPDVWPQL…PKKKKDPVAV (98 aa)) is disordered. Residues S863 and S867 each carry the phosphoserine modification. Residues 885–894 (EPLSSPPQEA) are compositionally biased toward low complexity. 2 Fibronectin type-III domains span residues 918–1016 (APYD…CEEW) and 1023–1122 (PPHS…TRPG). S1036 carries the phosphoserine modification. Ig-like C2-type domains follow at residues 1114–1212 (PVVA…EEMK), 1340–1426 (PHFA…LKLV), and 1555–1644 (RVLG…FTVS).

As to quaternary structure, homodimer. Interacts with TTN/titin and PNKD. As to expression, ubiquitously expressed in all striated muscles. Expressed in all fiber types.

It localises to the cytoplasm. It is found in the myofibril. Its subcellular location is the sarcomere. The protein resides in the m line. Its function is as follows. May link the intermediate filament cytoskeleton to the M-disk of the myofibrils in striated muscle. May also contact myosin filaments. Also binds beta-integrins. This is Myomesin-1 (Myom1) from Mus musculus (Mouse).